The primary structure comprises 52 residues: Large ribosomal subunit protein bL32c (52 aa).

It belongs to the bacterial ribosomal protein bL32 family.

The protein resides in the plastid. Its subcellular location is the chloroplast. The sequence is that of Large ribosomal subunit protein bL32c from Morus indica (Mulberry).